Consider the following 132-residue polypeptide: MSTTFAARLNRLFDTVYPPGRGPHTSAEVIAALKAEGITMSAPYLSQLRSGNRTNPSGATMAALANFFRIKAAYFTDDEYYEKLDKELQWLCTMRDDGVRRIAQRAHGLPSAAQQKVLDRIDELRRAEGIDA.

A DNA-binding region (H-T-H motif) is located at residues 38–50 (ITMSAPYLSQLRS).

Homodimer. Binds DNA as a dimer of dimers.

The protein localises to the cytoplasm. It localises to the nucleoid. Functionally, virulence regulator that has both architectural and regulatory roles. Impacts cell wall functions and pathogenesis through regulation of multiple genes. This Mycobacterium tuberculosis (strain CDC 1551 / Oshkosh) protein is Nucleoid-associated protein EspR.